The primary structure comprises 347 residues: Ribosomal RNA large subunit methyltransferase M (347 aa).

Residues serine 184, 217 to 220 (APGG), aspartate 236, aspartate 256, and aspartate 272 contribute to the S-adenosyl-L-methionine site. The Proton acceptor role is filled by lysine 301.

This sequence belongs to the class I-like SAM-binding methyltransferase superfamily. RNA methyltransferase RlmE family. RlmM subfamily. In terms of assembly, monomer.

It localises to the cytoplasm. The catalysed reaction is cytidine(2498) in 23S rRNA + S-adenosyl-L-methionine = 2'-O-methylcytidine(2498) in 23S rRNA + S-adenosyl-L-homocysteine + H(+). Its function is as follows. Catalyzes the 2'-O-methylation at nucleotide C2498 in 23S rRNA. The polypeptide is Ribosomal RNA large subunit methyltransferase M (Xanthomonas oryzae pv. oryzae (strain KACC10331 / KXO85)).